Here is an 827-residue protein sequence, read N- to C-terminus: Stage II sporulation protein E (827 aa).

10 consecutive transmembrane segments (helical) span residues 49 to 69 (IGFL…ALPF), 71 to 91 (GAML…VLAG), 116 to 136 (VAAF…FFSM), 142 to 162 (GFVY…AIVE), 175 to 195 (QSLP…EEII), 206 to 226 (TGLA…ARYV), 247 to 267 (GLIL…LAFS), 269 to 289 (LLGG…LIVG), 299 to 319 (GSAG…LFLL), and 320 to 340 (TPQS…EHLQ). At 341-827 (EQQQYARKIR…AIFQNKQEIS (487 aa)) the chain is on the cytoplasmic side. In terms of domain architecture, PPM-type phosphatase spans 594 to 804 (STGAAHAAKG…DDMTVVVVRI (211 aa)).

Mn(2+) is required as a cofactor.

It localises to the cell membrane. The catalysed reaction is O-phospho-L-seryl-[protein] + H2O = L-seryl-[protein] + phosphate. It carries out the reaction O-phospho-L-threonyl-[protein] + H2O = L-threonyl-[protein] + phosphate. In terms of biological role, normally needed for pro-sigma E processing during sporulation but can be bypassed in vegetative cells. Activates SpoIIAA by dephosphorylation. The sequence is that of Stage II sporulation protein E (spoIIE) from Bacillus subtilis (strain 168).